The following is a 480-amino-acid chain: Probable cytosol aminopeptidase (480 aa).

Residues Lys-248 and Asp-253 each contribute to the Mn(2+) site. The active site involves Lys-260. Positions 271, 330, and 332 each coordinate Mn(2+). Arg-334 is an active-site residue.

Belongs to the peptidase M17 family. Mn(2+) is required as a cofactor.

The protein localises to the cytoplasm. It carries out the reaction Release of an N-terminal amino acid, Xaa-|-Yaa-, in which Xaa is preferably Leu, but may be other amino acids including Pro although not Arg or Lys, and Yaa may be Pro. Amino acid amides and methyl esters are also readily hydrolyzed, but rates on arylamides are exceedingly low.. The catalysed reaction is Release of an N-terminal amino acid, preferentially leucine, but not glutamic or aspartic acids.. In terms of biological role, presumably involved in the processing and regular turnover of intracellular proteins. Catalyzes the removal of unsubstituted N-terminal amino acids from various peptides. This is Probable cytosol aminopeptidase from Solibacter usitatus (strain Ellin6076).